Here is a 197-residue protein sequence, read N- to C-terminus: MTNYPQLNTEINGNEIKLIMHTNKGDMTFKLLPDVAPKTVENFVTHAKNGYYNGVTFHRVINDFMVQGGDPTATGMGGESIYGEPFEDEFSKEAFNIYGALSMANAGPHTNGSQFFIVQMNEVPESMLSQLADGGWPEPIVKAYAETGGTPWLDQKHTVFGQLIEGKDTLEDIANTKVGPQDKPLHDITIDSIEIVE.

The region spanning 14–195 (NEIKLIMHTN…HDITIDSIEI (182 aa)) is the PPIase cyclophilin-type domain.

It belongs to the cyclophilin-type PPIase family.

The catalysed reaction is [protein]-peptidylproline (omega=180) = [protein]-peptidylproline (omega=0). In terms of biological role, PPIases accelerate the folding of proteins. It catalyzes the cis-trans isomerization of proline imidic peptide bonds in oligopeptides. In Staphylococcus saprophyticus subsp. saprophyticus (strain ATCC 15305 / DSM 20229 / NCIMB 8711 / NCTC 7292 / S-41), this protein is Putative peptidyl-prolyl cis-trans isomerase.